A 353-amino-acid chain; its full sequence is Photosystem II D2 protein (353 aa).

Thr2 carries the post-translational modification N-acetylthreonine. Phosphothreonine is present on Thr2. Residues 41–61 (CAYFALGGWFTGTTFVTSWYT) form a helical membrane-spanning segment. His118 is a binding site for chlorophyll a. The helical transmembrane segment at 125 to 141 (GFMLRQFELARSVQLRP) threads the bilayer. Gln130 and Asn143 together coordinate pheophytin a. The helical transmembrane segment at 153 to 166 (VFVSVFLIYPLGQS) threads the bilayer. His198 contributes to the chlorophyll a binding site. A helical membrane pass occupies residues 208-228 (AALLCAIHGATVENTLFEDGD). A plastoquinone contacts are provided by His215 and Phe262. Residue His215 participates in Fe cation binding. Residue His269 participates in Fe cation binding. A helical membrane pass occupies residues 279-295 (GLWMSALGVVGLALNLR).

Belongs to the reaction center PufL/M/PsbA/D family. As to quaternary structure, PSII is composed of 1 copy each of membrane proteins PsbA, PsbB, PsbC, PsbD, PsbE, PsbF, PsbH, PsbI, PsbJ, PsbK, PsbL, PsbM, PsbT, PsbX, PsbY, PsbZ, Psb30/Ycf12, at least 3 peripheral proteins of the oxygen-evolving complex and a large number of cofactors. It forms dimeric complexes. The D1/D2 heterodimer binds P680, chlorophylls that are the primary electron donor of PSII, and subsequent electron acceptors. It shares a non-heme iron and each subunit binds pheophytin, quinone, additional chlorophylls, carotenoids and lipids. There is also a Cl(-1) ion associated with D1 and D2, which is required for oxygen evolution. The PSII complex binds additional chlorophylls, carotenoids and specific lipids. is required as a cofactor.

The protein resides in the plastid. It localises to the chloroplast thylakoid membrane. The enzyme catalyses 2 a plastoquinone + 4 hnu + 2 H2O = 2 a plastoquinol + O2. Its function is as follows. Photosystem II (PSII) is a light-driven water:plastoquinone oxidoreductase that uses light energy to abstract electrons from H(2)O, generating O(2) and a proton gradient subsequently used for ATP formation. It consists of a core antenna complex that captures photons, and an electron transfer chain that converts photonic excitation into a charge separation. The D1/D2 (PsbA/PsbD) reaction center heterodimer binds P680, the primary electron donor of PSII as well as several subsequent electron acceptors. D2 is needed for assembly of a stable PSII complex. The polypeptide is Photosystem II D2 protein (Nandina domestica (Heavenly bamboo)).